Here is a 425-residue protein sequence, read N- to C-terminus: Serine--tRNA ligase (425 aa).

L-serine is bound at residue 232 to 234 (TSE). Residues 263 to 265 (RRE) and Val-279 contribute to the ATP site. L-serine is bound at residue Glu-286. An ATP-binding site is contributed by 350 to 353 (EVVS). Thr-387 is an L-serine binding site.

The protein belongs to the class-II aminoacyl-tRNA synthetase family. Type-1 seryl-tRNA synthetase subfamily. As to quaternary structure, homodimer. The tRNA molecule binds across the dimer.

It is found in the cytoplasm. It catalyses the reaction tRNA(Ser) + L-serine + ATP = L-seryl-tRNA(Ser) + AMP + diphosphate + H(+). The catalysed reaction is tRNA(Sec) + L-serine + ATP = L-seryl-tRNA(Sec) + AMP + diphosphate + H(+). Its pathway is aminoacyl-tRNA biosynthesis; selenocysteinyl-tRNA(Sec) biosynthesis; L-seryl-tRNA(Sec) from L-serine and tRNA(Sec): step 1/1. In terms of biological role, catalyzes the attachment of serine to tRNA(Ser). Is also able to aminoacylate tRNA(Sec) with serine, to form the misacylated tRNA L-seryl-tRNA(Sec), which will be further converted into selenocysteinyl-tRNA(Sec). The chain is Serine--tRNA ligase from Methanoregula boonei (strain DSM 21154 / JCM 14090 / 6A8).